A 207-amino-acid polypeptide reads, in one-letter code: Methylated-DNA--protein-cysteine methyltransferase (207 aa).

Tyrosine 123 and arginine 137 together coordinate DNA. The Nucleophile; methyl group acceptor role is filled by cysteine 154. Serine 160 contacts DNA.

The protein belongs to the MGMT family.

Its subcellular location is the nucleus. It catalyses the reaction a 6-O-methyl-2'-deoxyguanosine in DNA + L-cysteinyl-[protein] = S-methyl-L-cysteinyl-[protein] + a 2'-deoxyguanosine in DNA. The enzyme catalyses a 4-O-methyl-thymidine in DNA + L-cysteinyl-[protein] = a thymidine in DNA + S-methyl-L-cysteinyl-[protein]. Its function is as follows. Involved in the cellular defense against the biological effects of O6-methylguanine (O6-MeG) and O4-methylthymine (O4-MeT) in DNA. Repairs the methylated nucleobase in DNA by stoichiometrically transferring the methyl group to a cysteine residue in the enzyme. This is a suicide reaction: the enzyme is irreversibly inactivated. In Candida glabrata (strain ATCC 2001 / BCRC 20586 / JCM 3761 / NBRC 0622 / NRRL Y-65 / CBS 138) (Yeast), this protein is Methylated-DNA--protein-cysteine methyltransferase (MGT1).